Reading from the N-terminus, the 103-residue chain is Protein reprimo A (103 aa).

A helical transmembrane segment spans residues 50–70 (IVQIAVMCVLSLTVVFGIFFL).

This sequence belongs to the reprimo family.

The protein localises to the cytoplasm. It localises to the membrane. Its function is as follows. May be involved in the regulation of p53-dependent G2 arrest of the cell cycle. This chain is Protein reprimo A, found in Danio rerio (Zebrafish).